Consider the following 644-residue polypeptide: Exoribonuclease 2 (644 aa).

The RNB domain maps to 189–516 (RRDLTALDFV…NHRLLKAIIK (328 aa)). Positions 561–643 (DTRFAAEIID…ETRSIIARPA (83 aa)) constitute an S1 motif domain.

The protein belongs to the RNR ribonuclease family. RNase II subfamily.

The protein localises to the cytoplasm. The catalysed reaction is Exonucleolytic cleavage in the 3'- to 5'-direction to yield nucleoside 5'-phosphates.. Functionally, involved in mRNA degradation. Hydrolyzes single-stranded polyribonucleotides processively in the 3' to 5' direction. This chain is Exoribonuclease 2, found in Klebsiella pneumoniae subsp. pneumoniae (strain ATCC 700721 / MGH 78578).